The chain runs to 544 residues: Chaperonin GroEL (544 aa).

ATP contacts are provided by residues 30-33 (TLGP), lysine 51, 87-91 (DGTTT), glycine 415, 479-481 (NAA), and aspartate 495.

This sequence belongs to the chaperonin (HSP60) family. As to quaternary structure, forms a cylinder of 14 subunits composed of two heptameric rings stacked back-to-back. Interacts with the co-chaperonin GroES.

The protein localises to the cytoplasm. The catalysed reaction is ATP + H2O + a folded polypeptide = ADP + phosphate + an unfolded polypeptide.. Functionally, together with its co-chaperonin GroES, plays an essential role in assisting protein folding. The GroEL-GroES system forms a nano-cage that allows encapsulation of the non-native substrate proteins and provides a physical environment optimized to promote and accelerate protein folding. The protein is Chaperonin GroEL of Acinetobacter baumannii (strain AB307-0294).